The following is a 176-amino-acid chain: ATP-dependent protease subunit HslV (176 aa).

The active site involves T5. Residues G161, C164, and T167 each coordinate Na(+).

Belongs to the peptidase T1B family. HslV subfamily. As to quaternary structure, a double ring-shaped homohexamer of HslV is capped on each side by a ring-shaped HslU homohexamer. The assembly of the HslU/HslV complex is dependent on binding of ATP.

Its subcellular location is the cytoplasm. The catalysed reaction is ATP-dependent cleavage of peptide bonds with broad specificity.. Allosterically activated by HslU binding. Protease subunit of a proteasome-like degradation complex believed to be a general protein degrading machinery. This is ATP-dependent protease subunit HslV from Sulfurovum sp. (strain NBC37-1).